The primary structure comprises 128 residues: Fluoride-specific ion channel FluC (128 aa).

4 consecutive transmembrane segments (helical) span residues Ile5 to Ala25, Leu35 to Phe55, Leu67 to Val87, and Phe96 to Leu116. 2 residues coordinate Na(+): Gly75 and Thr78.

The protein belongs to the fluoride channel Fluc/FEX (TC 1.A.43) family.

The protein resides in the cell inner membrane. The catalysed reaction is fluoride(in) = fluoride(out). Its activity is regulated as follows. Na(+) is not transported, but it plays an essential structural role and its presence is essential for fluoride channel function. Functionally, fluoride-specific ion channel. Important for reducing fluoride concentration in the cell, thus reducing its toxicity. This Burkholderia cenocepacia (strain HI2424) protein is Fluoride-specific ion channel FluC.